Here is a 348-residue protein sequence, read N- to C-terminus: Phosphate acyltransferase (348 aa).

It belongs to the PlsX family. Homodimer. Probably interacts with PlsY.

The protein localises to the cytoplasm. It carries out the reaction a fatty acyl-[ACP] + phosphate = an acyl phosphate + holo-[ACP]. The protein operates within lipid metabolism; phospholipid metabolism. Functionally, catalyzes the reversible formation of acyl-phosphate (acyl-PO(4)) from acyl-[acyl-carrier-protein] (acyl-ACP). This enzyme utilizes acyl-ACP as fatty acyl donor, but not acyl-CoA. The protein is Phosphate acyltransferase of Rhizobium etli (strain ATCC 51251 / DSM 11541 / JCM 21823 / NBRC 15573 / CFN 42).